The chain runs to 90 residues: Probable Fe(2+)-trafficking protein (90 aa).

This sequence belongs to the Fe(2+)-trafficking protein family. As to quaternary structure, monomer.

Could be a mediator in iron transactions between iron acquisition and iron-requiring processes, such as synthesis and/or repair of Fe-S clusters in biosynthetic enzymes. This is Probable Fe(2+)-trafficking protein from Yersinia enterocolitica serotype O:8 / biotype 1B (strain NCTC 13174 / 8081).